The following is a 556-amino-acid chain: Formate--tetrahydrofolate ligase 1 (556 aa).

65–72 (TPAGEGKS) serves as a coordination point for ATP.

Belongs to the formate--tetrahydrofolate ligase family.

The catalysed reaction is (6S)-5,6,7,8-tetrahydrofolate + formate + ATP = (6R)-10-formyltetrahydrofolate + ADP + phosphate. The protein operates within one-carbon metabolism; tetrahydrofolate interconversion. The sequence is that of Formate--tetrahydrofolate ligase 1 from Streptococcus pyogenes serotype M4 (strain MGAS10750).